The sequence spans 546 residues: MAKEIKFSDSARNLLFEGVRQLHDAVKVTMGPRGRNVLIQKSYGAPSITKDGVSVAKEIELSCPVANMGAQLVKEVASKTADAAGDGTTTATVLAYSIFKEGLRNITAGANPIEVKRGMDKAAEAIINELKKASKKVGGKEEITQVATISANSDHNIGKLIADAMEKVGKDGVITVEEAKGIEDELDVVEGMQFDRGYLSPYFVTNAEKMTAQLDNAYILLTDKKISSMKDILPLLEKTMKEGKPLLIIAEDIEGEALTTLVVNKLRGVLNIAAVKAPGFGDRRKEMLKDIAILTGGQVISEELGLSLENAEVEFLGKAGRIVIDKDNTTIVDGKGHSHDVKDRVAQIKTQIASTTSDYDKEKLQERLAKLSGGVAVIKVGAASEVEMKEKKDRVDDALSATKAAVEEGIVIGGGAALIRAAQKVHLNLHDDEKVGYEIIMRAIKAPLAQIAINAGYDGGVVVNEVEKHEGHFGFNASNGKYVDMFKEGIIDPLKVERIALQNAVSVSSLLLTTEATVHEIKEEKAAPAMPDMGGMGGMGGMGGMM.

Residues 29 to 32 (TMGP), Lys50, 86 to 90 (DGTTT), Gly414, and Asp492 each bind ATP.

The protein belongs to the chaperonin (HSP60) family. As to quaternary structure, forms a cylinder of 14 subunits composed of two heptameric rings stacked back-to-back. Interacts with the co-chaperonin GroES.

The protein resides in the cytoplasm. It carries out the reaction ATP + H2O + a folded polypeptide = ADP + phosphate + an unfolded polypeptide.. In terms of biological role, together with its co-chaperonin GroES, plays an essential role in assisting protein folding. The GroEL-GroES system forms a nano-cage that allows encapsulation of the non-native substrate proteins and provides a physical environment optimized to promote and accelerate protein folding. In Helicobacter pylori (strain ATCC 700392 / 26695) (Campylobacter pylori), this protein is Chaperonin GroEL.